We begin with the raw amino-acid sequence, 313 residues long: ADP,ATP carrier protein (313 aa).

Solcar repeat units follow at residues Pro-11 to Met-104, Lys-116 to Val-208, and Asn-216 to Leu-302. The next 5 helical transmembrane spans lie at Phe-13 to Leu-40, Thr-81 to Phe-105, Tyr-114 to Leu-134, Phe-184 to Ile-205, and Leu-219 to Leu-239. ADP is bound by residues Arg-86 and Arg-98. Residue Arg-243 coordinates ADP. The interval Arg-243–Met-248 is important for transport activity. A Nucleotide carrier signature motif motif is present at residues Arg-243–Met-248. Residues Ala-279 to Leu-299 traverse the membrane as a helical segment.

The protein belongs to the mitochondrial carrier (TC 2.A.29) family. As to quaternary structure, monomer.

Its subcellular location is the mitochondrion inner membrane. The catalysed reaction is ADP(in) + ATP(out) = ADP(out) + ATP(in). The matrix-open state (m-state) is inhibited by the membrane-permeable bongkrekic acid (BKA). The cytoplasmic-open state (c-state) is inhibited by the membrane-impermeable toxic inhibitor carboxyatractyloside (CATR). ADP:ATP antiporter that mediates import of ADP into the mitochondrial matrix for ATP synthesis, and export of ATP out to fuel the cell. Cycles between the cytoplasmic-open state (c-state) and the matrix-open state (m-state): operates by the alternating access mechanism with a single substrate-binding site intermittently exposed to either the cytosolic (c-state) or matrix (m-state) side of the inner mitochondrial membrane. This is ADP,ATP carrier protein (aac) from Neurospora crassa (strain ATCC 24698 / 74-OR23-1A / CBS 708.71 / DSM 1257 / FGSC 987).